Reading from the N-terminus, the 430-residue chain is uncharacterized protein (430 aa).

The next 10 helical transmembrane spans lie at 13–33 (FFAA…FAFF), 47–67 (LAEL…GVVA), 88–108 (VVLF…ILFI), 138–158 (GLNQ…GAFM), 228–248 (LIFG…LPMF), 264–284 (SVFT…GTLI), 296–316 (IPIF…ILWV), 319–339 (AAAF…GGWM), 358–378 (FMMF…PKFV), and 383–403 (YLYY…FIAL).

Belongs to the major facilitator superfamily.

The protein localises to the cell membrane. This is an uncharacterized protein from Bacillus subtilis (strain 168).